The following is a 206-amino-acid chain: Methylthioribulose-1-phosphate dehydratase (206 aa).

Positions 96 and 98 each coordinate Zn(2+).

Belongs to the aldolase class II family. MtnB subfamily. Requires Zn(2+) as cofactor.

The enzyme catalyses 5-(methylsulfanyl)-D-ribulose 1-phosphate = 5-methylsulfanyl-2,3-dioxopentyl phosphate + H2O. Its pathway is amino-acid biosynthesis; L-methionine biosynthesis via salvage pathway; L-methionine from S-methyl-5-thio-alpha-D-ribose 1-phosphate: step 2/6. Catalyzes the dehydration of methylthioribulose-1-phosphate (MTRu-1-P) into 2,3-diketo-5-methylthiopentyl-1-phosphate (DK-MTP-1-P). In Azotobacter vinelandii (strain DJ / ATCC BAA-1303), this protein is Methylthioribulose-1-phosphate dehydratase.